The following is a 305-amino-acid chain: UDP-3-O-acyl-N-acetylglucosamine deacetylase (305 aa).

Zn(2+)-binding residues include histidine 79, histidine 238, and aspartate 242. Residue histidine 265 is the Proton donor of the active site.

Belongs to the LpxC family. Requires Zn(2+) as cofactor.

The catalysed reaction is a UDP-3-O-[(3R)-3-hydroxyacyl]-N-acetyl-alpha-D-glucosamine + H2O = a UDP-3-O-[(3R)-3-hydroxyacyl]-alpha-D-glucosamine + acetate. It participates in glycolipid biosynthesis; lipid IV(A) biosynthesis; lipid IV(A) from (3R)-3-hydroxytetradecanoyl-[acyl-carrier-protein] and UDP-N-acetyl-alpha-D-glucosamine: step 2/6. Catalyzes the hydrolysis of UDP-3-O-myristoyl-N-acetylglucosamine to form UDP-3-O-myristoylglucosamine and acetate, the committed step in lipid A biosynthesis. In Colwellia psychrerythraea (strain 34H / ATCC BAA-681) (Vibrio psychroerythus), this protein is UDP-3-O-acyl-N-acetylglucosamine deacetylase.